The chain runs to 124 residues: Putative RNA polymerase II transcriptional coactivator (124 aa).

Residues 1–61 are disordered; it reads MSSSSSSEDE…GRLKDSDGNE (61 aa). Basic and acidic residues-rich tracts occupy residues 11-21 and 39-58; these read LEKKVTKEQKK and QEVK…KDSD.

It belongs to the transcriptional coactivator PC4 family.

It localises to the nucleus. General coactivator that functions cooperatively with TAFs and mediates functional interactions between upstream activators and the general transcriptional machinery. Binds single-stranded DNA. The protein is Putative RNA polymerase II transcriptional coactivator of Caenorhabditis elegans.